Consider the following 520-residue polypeptide: Nonsense-mediated mRNA decay factor SMG9 (520 aa).

Disordered regions lie at residues Met1 to Leu94, Lys108 to Thr143, and Lys341 to Gly360. Ser2 bears the N-acetylserine mark. Phosphoserine is present on residues Ser2, Ser4, Ser7, Ser32, and Ser53. The segment covering Gly36–Ser53 has biased composition (basic and acidic residues). 2 stretches are compositionally biased toward pro residues: residues Gln78 to Leu94 and Thr122 to Pro133. Residues Pro342–Ser357 are compositionally biased toward low complexity. Ser451 carries the phosphoserine modification.

It belongs to the SMG9 family. In terms of assembly, self-associates to form homodimers and forms heterodimers with SMG8; these assembly forms may represent SMG1C intermediate forms. Component of the SMG1C complex composed of SMG1, SMG8 and SMG9. Interacts with DHX34; the interaction is RNA-independent. Post-translationally, phosphorylated by SMG1.

Functionally, involved in nonsense-mediated decay (NMD) of mRNAs containing premature stop codons. Is recruited by release factors to stalled ribosomes together with SMG1 and SMG8 (forming the SMG1C protein kinase complex) and, in the SMG1C complex, is required for the efficient association between SMG1 and SMG8. Plays a role in brain, heart, and eye development. In Homo sapiens (Human), this protein is Nonsense-mediated mRNA decay factor SMG9.